The chain runs to 699 residues: UvrABC system protein B (699 aa).

The Helicase ATP-binding domain maps to 35–188 (ERINNGEKDV…DHLLRKFVSM (154 aa)). 48 to 55 (GATGTGKS) is a binding site for ATP. Residues 101-124 (YYDYYQPEAYVAQTDTFIEKDSSI) carry the Beta-hairpin motif. Residues 438–604 (QIDDLLGEIR…PLRKKIADIT (167 aa)) enclose the Helicase C-terminal domain. One can recognise a UVR domain in the interval 654–689 (VGLIEQLTEQMHGAAAELQFEVAARIRDEVKELKRE).

It belongs to the UvrB family. Forms a heterotetramer with UvrA during the search for lesions. Interacts with UvrC in an incision complex.

The protein resides in the cytoplasm. The UvrABC repair system catalyzes the recognition and processing of DNA lesions. A damage recognition complex composed of 2 UvrA and 2 UvrB subunits scans DNA for abnormalities. Upon binding of the UvrA(2)B(2) complex to a putative damaged site, the DNA wraps around one UvrB monomer. DNA wrap is dependent on ATP binding by UvrB and probably causes local melting of the DNA helix, facilitating insertion of UvrB beta-hairpin between the DNA strands. Then UvrB probes one DNA strand for the presence of a lesion. If a lesion is found the UvrA subunits dissociate and the UvrB-DNA preincision complex is formed. This complex is subsequently bound by UvrC and the second UvrB is released. If no lesion is found, the DNA wraps around the other UvrB subunit that will check the other stand for damage. This is UvrABC system protein B from Paenarthrobacter aurescens (strain TC1).